Here is a 290-residue protein sequence, read N- to C-terminus: Purine nucleoside phosphorylase (290 aa).

68-69 (RN) is a phosphate binding site. Met204 is a binding site for substrate. Thr205 lines the phosphate pocket.

It belongs to the PNP/MTAP phosphorylase family. MTAP subfamily. Homotrimer.

The protein localises to the cytoplasm. It localises to the nucleus. The enzyme catalyses a purine D-ribonucleoside + phosphate = a purine nucleobase + alpha-D-ribose 1-phosphate. Its pathway is purine metabolism; purine nucleoside salvage. Its function is as follows. Purine nucleoside phosphorylase involved in purine salvage. The protein is Purine nucleoside phosphorylase of Drosophila melanogaster (Fruit fly).